A 359-amino-acid polypeptide reads, in one-letter code: DNA replication and repair protein RecF (359 aa).

30-37 (GPNGSGKT) is a binding site for ATP.

Belongs to the RecF family.

It localises to the cytoplasm. The RecF protein is involved in DNA metabolism; it is required for DNA replication and normal SOS inducibility. RecF binds preferentially to single-stranded, linear DNA. It also seems to bind ATP. The sequence is that of DNA replication and repair protein RecF from Aliivibrio fischeri (strain ATCC 700601 / ES114) (Vibrio fischeri).